The primary structure comprises 473 residues: BTB/POZ domain-containing protein KCTD8 (473 aa).

The segment at 1–36 is disordered; it reads MALKDTGSGGSTILPISEMVSSSSSPGASAAAAPGP. Positions 21 to 35 are enriched in low complexity; the sequence is SSSSSPGASAAAAPG. The 79-residue stretch at 44–122 folds into the BTB domain; the sequence is EVVELNVGGQ…LRDKQLALPE (79 aa). Ser78 bears the Phosphoserine mark. Position 80 is an omega-N-methylarginine (Arg80). Residues 326 to 409 form a disordered region; it reads IVSPKQEHED…WIPPPDKRRN (84 aa). Residues 330–346 are compositionally biased toward basic and acidic residues; the sequence is KQEHEDRKHDKVTDKGS. Residues 347–388 show a composition bias toward polar residues; that stretch reads ESGTSCNELSTSSCDSHSEASTPQDNPSSAQQATAHQPNTLT. Ser410 bears the Phosphoserine mark.

Interacts as a tetramer with GABRB1 and GABRB2.

The protein localises to the presynaptic cell membrane. Its subcellular location is the postsynaptic cell membrane. Functionally, auxiliary subunit of GABA-B receptors that determine the pharmacology and kinetics of the receptor response. Increases agonist potency and markedly alter the G-protein signaling of the receptors by accelerating onset and promoting desensitization. The sequence is that of BTB/POZ domain-containing protein KCTD8 (KCTD8) from Homo sapiens (Human).